The chain runs to 340 residues: Tryptophan--tRNA ligase (340 aa).

Residues 11–13 and 19–20 each bind ATP; these read RPT and GH. A 'HIGH' region motif is present at residues 12–20; that stretch reads PTGKLHLGH. Asp-140 lines the L-tryptophan pocket. Residues 152-154, Leu-194, and 202-206 contribute to the ATP site; these read GND and KMSKS. The 'KMSKS' region motif lies at 202–206; the sequence is KMSKS.

Belongs to the class-I aminoacyl-tRNA synthetase family. Homodimer.

The protein resides in the cytoplasm. The catalysed reaction is tRNA(Trp) + L-tryptophan + ATP = L-tryptophyl-tRNA(Trp) + AMP + diphosphate + H(+). Its function is as follows. Catalyzes the attachment of tryptophan to tRNA(Trp). This is Tryptophan--tRNA ligase from Streptococcus pyogenes serotype M1.